A 382-amino-acid polypeptide reads, in one-letter code: Polyadenylate-binding protein 5 (382 aa).

RRM domains lie at 18 to 96, 106 to 182, 199 to 276, and 302 to 378; these read AALY…WSQP, GNIF…RFKF, TNVF…RAQK, and VPIY…LGQA.

Its subcellular location is the cytoplasm. Binds the poly(A) tail of mRNA. May be involved in cytoplasmic regulatory processes of mRNA metabolism. Can probably bind to cytoplasmic RNA sequences other than poly(A) in vivo. In Gorilla gorilla gorilla (Western lowland gorilla), this protein is Polyadenylate-binding protein 5 (PABPC5).